Consider the following 59-residue polypeptide: UPF0434 protein Ping_0902 (59 aa).

The protein belongs to the UPF0434 family.

This chain is UPF0434 protein Ping_0902, found in Psychromonas ingrahamii (strain DSM 17664 / CCUG 51855 / 37).